Reading from the N-terminus, the 133-residue chain is Large ribosomal subunit protein uL16c (133 aa).

It belongs to the universal ribosomal protein uL16 family. Part of the 50S ribosomal subunit.

Its subcellular location is the plastid. The sequence is that of Large ribosomal subunit protein uL16c from Euglena longa (Euglenophycean alga).